Consider the following 519-residue polypeptide: AarF domain-containing protein kinase 1 (519 aa).

A Protein kinase domain is found at 145–481 (SFEDTPLGAA…SLYRRVHISL (337 aa)). ATP-binding positions include 151 to 159 (LGAASLAQV) and Lys-173. The active-site Proton acceptor is Asp-305.

The protein belongs to the protein kinase superfamily. ADCK protein kinase family.

The protein localises to the mitochondrion. Appears to be essential for maintaining mitochondrial cristae formation and mitochondrial function by acting via YME1L1 in a kinase-independent manner to regulate essential mitochondrial structural proteins OPA1 and IMMT. The action of this enzyme is not yet clear. It is not known if it has protein kinase activity and what type of substrate it would phosphorylate (Ser, Thr or Tyr). The protein is AarF domain-containing protein kinase 1 (ADCK1) of Gallus gallus (Chicken).